Reading from the N-terminus, the 91-residue chain is Small ribosomal subunit protein uS19 (91 aa).

The protein belongs to the universal ribosomal protein uS19 family.

Protein S19 forms a complex with S13 that binds strongly to the 16S ribosomal RNA. This is Small ribosomal subunit protein uS19 from Syntrophotalea carbinolica (strain DSM 2380 / NBRC 103641 / GraBd1) (Pelobacter carbinolicus).